The following is a 363-amino-acid chain: Succinyl-diaminopimelate desuccinylase (363 aa).

Histidine 63 lines the Zn(2+) pocket. The active site involves aspartate 65. Residue aspartate 94 participates in Zn(2+) binding. Glutamate 123 acts as the Proton acceptor in catalysis. Zn(2+) contacts are provided by glutamate 124, glutamate 152, and histidine 337.

This sequence belongs to the peptidase M20A family. DapE subfamily. In terms of assembly, homodimer. Zn(2+) serves as cofactor. Co(2+) is required as a cofactor.

It catalyses the reaction N-succinyl-(2S,6S)-2,6-diaminopimelate + H2O = (2S,6S)-2,6-diaminopimelate + succinate. It functions in the pathway amino-acid biosynthesis; L-lysine biosynthesis via DAP pathway; LL-2,6-diaminopimelate from (S)-tetrahydrodipicolinate (succinylase route): step 3/3. In terms of biological role, catalyzes the hydrolysis of N-succinyl-L,L-diaminopimelic acid (SDAP), forming succinate and LL-2,6-diaminopimelate (DAP), an intermediate involved in the bacterial biosynthesis of lysine and meso-diaminopimelic acid, an essential component of bacterial cell walls. The sequence is that of Succinyl-diaminopimelate desuccinylase from Campylobacter concisus (strain 13826).